The chain runs to 277 residues: Shikimate dehydrogenase (NADP(+)) (277 aa).

Residues 15-17 (SLS) and threonine 62 contribute to the shikimate site. Catalysis depends on lysine 66, which acts as the Proton acceptor. The shikimate site is built by asparagine 87 and aspartate 102. Residues 127-131 (GAGGA), 151-156 (NRTRDK), and isoleucine 219 each bind NADP(+). Tyrosine 221 lines the shikimate pocket. Glycine 242 serves as a coordination point for NADP(+).

Belongs to the shikimate dehydrogenase family. As to quaternary structure, homodimer.

It carries out the reaction shikimate + NADP(+) = 3-dehydroshikimate + NADPH + H(+). Its pathway is metabolic intermediate biosynthesis; chorismate biosynthesis; chorismate from D-erythrose 4-phosphate and phosphoenolpyruvate: step 4/7. In terms of biological role, involved in the biosynthesis of the chorismate, which leads to the biosynthesis of aromatic amino acids. Catalyzes the reversible NADPH linked reduction of 3-dehydroshikimate (DHSA) to yield shikimate (SA). This chain is Shikimate dehydrogenase (NADP(+)), found in Bacillus mycoides (strain KBAB4) (Bacillus weihenstephanensis).